Consider the following 300-residue polypeptide: Lysenin-related protein 1 (300 aa).

Positions 12-35 (EEIEVDVVSVWKEGYAYENRGNSS) are N-terminal cap domain. The beta-hairpin domain stretch occupies residues 36–109 (VQQKITMTKG…SQVIEHTVTI (74 aa)). The N-terminal cap domain stretch occupies residues 110 to 158 (PPNKKFTRWKLNADVGGTGIEYMYLIDEVTAIGADLTIPEVNKSRAKIL). The segment at 159–299 (VGRQIHLGET…EDKWILEVVN (141 aa)) is C-terminal receptor-binding domain. An N-(acyl)-sphingosylphosphocholine contacts are provided by Lys187, Ser229, Tyr235, and Tyr284. A disulfide bond links Cys274 and Cys285.

It belongs to the lysenin family. Binds to sphingomyelin as a monomer by using its C-terminal domain. Forms a nonamer when sphingomyelin/LRP-1 ratio is lower than ca 500. Oligomerization, but not binding, is influenced by the fluidity of sphingomyelin. As to expression, expressed by coelomocytes.

Its subcellular location is the secreted. It localises to the target cell membrane. Functionally, pore-forming toxin that specifically binds sphingomyelin in the plasma membrane of various cells. Has hemolytic activity. Binding and hemolytic activities of this toxin are 10 times less than those of lysenin and lysenin-related protein 2. The protein is Lysenin-related protein 1 of Eisenia fetida (Red wiggler worm).